The sequence spans 208 residues: Potassium-transporting ATPase KdpC subunit (208 aa).

The chain crosses the membrane as a helical span at residues Pro-6–Leu-26.

Belongs to the KdpC family. In terms of assembly, the system is composed of three essential subunits: KdpA, KdpB and KdpC.

Its subcellular location is the cell membrane. Functionally, part of the high-affinity ATP-driven potassium transport (or Kdp) system, which catalyzes the hydrolysis of ATP coupled with the electrogenic transport of potassium into the cytoplasm. This subunit acts as a catalytic chaperone that increases the ATP-binding affinity of the ATP-hydrolyzing subunit KdpB by the formation of a transient KdpB/KdpC/ATP ternary complex. The polypeptide is Potassium-transporting ATPase KdpC subunit (Clostridioides difficile (strain 630) (Peptoclostridium difficile)).